A 395-amino-acid polypeptide reads, in one-letter code: Acid ceramidase (395 aa).

Residues 1–20 (MLGWSRLTFILLSGIVTCLV) form the signal peptide. A disulfide bridge links Cys31 with Cys340. Cys143 serves as the catalytic Nucleophile. 4 N-linked (GlcNAc...) asparagine glycosylation sites follow: Asn195, Asn259, Asn286, and Asn342. Cys388 and Cys392 are joined by a disulfide.

Belongs to the acid ceramidase family. As to quaternary structure, heterodimer; disulfide-linked. The heterodimer is composed of the disulfide-linked alpha and beta chains produced by autocatalytic cleavage of the precursor. N-glycosylated. Post-translationally, proteolytically cleaved into two chains alpha and beta that remain associated via a disulfide bond. Cleavage gives rise to a conformation change that activates the enzyme. The same catalytic Cys residue mediates the autoproteolytic cleavage and subsequent hydrolysis of lipid substrates. The beta chain may undergo an additional C-terminal processing.

The protein resides in the lysosome. Its subcellular location is the secreted. The catalysed reaction is an N-acylsphing-4-enine + H2O = sphing-4-enine + a fatty acid. It carries out the reaction N-dodecanoylsphing-4-enine + H2O = dodecanoate + sphing-4-enine. The enzyme catalyses N-tetradecanoylsphing-4-enine + H2O = tetradecanoate + sphing-4-enine. It catalyses the reaction N-hexadecanoylsphing-4-enine + H2O = sphing-4-enine + hexadecanoate. The catalysed reaction is N-octadecanoylsphing-4-enine + H2O = sphing-4-enine + octadecanoate. It carries out the reaction N-dodecanoyl-(4R)-hydroxysphinganine + H2O = (4R)-hydroxysphinganine + dodecanoate. The enzyme catalyses N-(dodecanoyl)-sphinganine + H2O = dodecanoate + sphinganine. It catalyses the reaction N-(acetyl)-sphing-4-enine + H2O = sphing-4-enine + acetate. The catalysed reaction is N-(hexanoyl)sphing-4-enine + H2O = hexanoate + sphing-4-enine. It carries out the reaction N-octanoylsphing-4-enine + H2O = octanoate + sphing-4-enine. The enzyme catalyses N-(9Z-octadecenoyl)-sphing-4-enine + H2O = sphing-4-enine + (9Z)-octadecenoate. It catalyses the reaction N-dodecanoylethanolamine + H2O = dodecanoate + ethanolamine. The protein operates within lipid metabolism; sphingolipid metabolism. Functionally, lysosomal ceramidase that hydrolyzes sphingolipid ceramides into sphingosine and free fatty acids at acidic pH. Ceramides, sphingosine, and its phosphorylated form sphingosine-1-phosphate are bioactive lipids that mediate cellular signaling pathways regulating several biological processes including cell proliferation, apoptosis and differentiation. Has a higher catalytic efficiency towards C12-ceramides versus other ceramides. Also catalyzes the reverse reaction allowing the synthesis of ceramides from fatty acids and sphingosine. For the reverse synthetic reaction, the natural sphingosine D-erythro isomer is more efficiently utilized as a substrate compared to D-erythro-dihydrosphingosine and D-erythro-phytosphingosine, while the fatty acids with chain lengths of 12 or 14 carbons are the most efficiently used. Also has an N-acylethanolamine hydrolase activity. By regulating the levels of ceramides, sphingosine and sphingosine-1-phosphate in the epidermis, mediates the calcium-induced differentiation of epidermal keratinocytes. Also indirectly regulates tumor necrosis factor/TNF-induced apoptosis. By regulating the intracellular balance between ceramides and sphingosine, in adrenocortical cells, probably also acts as a regulator of steroidogenesis. The chain is Acid ceramidase from Bos taurus (Bovine).